The sequence spans 365 residues: Green-sensitive opsin P521 (365 aa).

Residues 1-51 lie on the Extracellular side of the membrane; that stretch reads MTEAWNVAVFAARRSRDDDDTTRGSVFTYTNTNNTRGPFEGPNYHIAPRWV. A glycan (N-linked (GlcNAc...) asparagine) is linked at N33. Residues 52–76 form a helical membrane-spanning segment; it reads YNLVSFFMIIVVIASCFTNGLVLVA. The Cytoplasmic segment spans residues 77 to 88; sequence TAKFKKLRHPLN. Residues 89–113 form a helical membrane-spanning segment; the sequence is WILVNLAFVDLVETLVASTISVFNQ. The Extracellular portion of the chain corresponds to 114-128; the sequence is IFGYFILGHPLCVIE. C125 and C202 are oxidised to a cystine. The chain crosses the membrane as a helical span at residues 129-148; it reads GYVVSSCGITGLWSLAIISW. Topologically, residues 149-167 are cytoplasmic; it reads ERWFVVCKPFGNIKFDSKL. Residues 168–191 traverse the membrane as a helical segment; the sequence is AIIGIVFSWVWAWGWSAPPIFGWS. Residues 192–217 are Extracellular-facing; it reads RYWPHGLKTSCGPDVFSGSVELGCQS. Residues 218–245 form a helical membrane-spanning segment; sequence FMLTLMITCCFLPLFIIIVCYLQVWMAI. The Cytoplasmic segment spans residues 246–267; that stretch reads RAVAAQQKESESTQKAEREVSR. Residues 268–291 traverse the membrane as a helical segment; sequence MVVVMIVAFCICWGPYASFVSFAA. At 292-299 the chain is on the extracellular side; sequence ANPGYAFH. Residues 300-324 traverse the membrane as a helical segment; it reads PLAAALPAYFAKSATIYNPVIYVFM. N6-(retinylidene)lysine is present on K311. The Cytoplasmic segment spans residues 325-365; it reads NRQFRNCIMQLFGKKVDDGSEASTTSRTEVSSVSNSSVAPA. The segment at 342 to 365 is disordered; sequence DGSEASTTSRTEVSSVSNSSVAPA. Low complexity predominate over residues 345–365; that stretch reads EASTTSRTEVSSVSNSSVAPA.

The protein belongs to the G-protein coupled receptor 1 family. Opsin subfamily. In terms of processing, phosphorylated on some or all of the serine and threonine residues present in the C-terminal region. In this lizard the color pigments are found in the rod-shaped photoreceptor cells which have been derived from ancestral cone-like photoreceptors.

It localises to the membrane. Functionally, visual pigments are the light-absorbing molecules that mediate vision. They consist of an apoprotein, opsin, covalently linked to cis-retinal. The polypeptide is Green-sensitive opsin P521 (Gekko gecko (Tokay gecko)).